The following is a 310-amino-acid chain: Integrin-binding sialoprotein (310 aa).

The signal sequence occupies residues 1–16; sequence MKTVLILLSILGMACA. 7 positions are modified to phosphoserine: Ser31, Ser62, Ser67, Ser75, Ser76, Ser98, and Ser106. Residues 61–284 form a disordered region; it reads QSSSDSSEEN…NGDPRGDNYR (224 aa). The span at 62–74 shows a compositional bias: low complexity; it reads SSSDSSEENGNGD. Acidic residues-rich tracts occupy residues 75 to 87 and 96 to 108; these read SSEE…ETSN and EDSD…ESEA. Asn110 is a glycosylation site (N-linked (GlcNAc...) asparagine). Position 144 is a phosphothreonine (Thr144). A compositionally biased stretch (acidic residues) spans 152–174; it reads DESDEEEEEEEEEENEAEVDDNE. Phosphoserine is present on Ser154. Residues 175-187 are compositionally biased toward polar residues; sequence QGINGTSSNSTEV. Residues Asn178 and Asn183 are each glycosylated (N-linked (GlcNAc...) asparagine). Residues 198–208 are compositionally biased toward acidic residues; the sequence is NGEEDGEEESV. The segment covering 209–227 has biased composition (polar residues); it reads TEANTEGITVAGETTTSPN. Ser273 is modified (phosphoserine). Positions 279-281 match the Integrin-binding motif motif; it reads RGD. Residue Ser300 is modified to Phosphoserine. Sulfotyrosine is present on residues Tyr306 and Tyr307.

Monomer. Interacts with integrins; the interaction promotes cell adhesion.

The protein resides in the secreted. In terms of biological role, binds tightly to hydroxyapatite. Appears to form an integral part of the mineralized matrix. Probably important to cell-matrix interaction. Promotes adhesion and migration of various cells via the alpha-V/beta-3 integrin receptor (ITGAV:ITGB3). The protein is Integrin-binding sialoprotein (IBSP) of Bos taurus (Bovine).